Here is a 318-residue protein sequence, read N- to C-terminus: UDP-N-acetylenolpyruvoylglucosamine reductase (318 aa).

The 167-residue stretch at 38 to 204 (IGGVCPVIVE…LGIEILLKEG (167 aa)) folds into the FAD-binding PCMH-type domain. Residue R182 is part of the active site. Over residues 212-229 (SLKDKRDRRNSSQPENKK) the composition is skewed to basic and acidic residues. The segment at 212–232 (SLKDKRDRRNSSQPENKKSAG) is disordered. Residue S233 is the Proton donor of the active site. E310 is a catalytic residue.

Belongs to the MurB family. It depends on FAD as a cofactor.

The protein localises to the cytoplasm. The enzyme catalyses UDP-N-acetyl-alpha-D-muramate + NADP(+) = UDP-N-acetyl-3-O-(1-carboxyvinyl)-alpha-D-glucosamine + NADPH + H(+). It participates in cell wall biogenesis; peptidoglycan biosynthesis. Cell wall formation. The chain is UDP-N-acetylenolpyruvoylglucosamine reductase from Leptospira interrogans serogroup Icterohaemorrhagiae serovar copenhageni (strain Fiocruz L1-130).